A 497-amino-acid chain; its full sequence is 3-octaprenyl-4-hydroxybenzoate carboxy-lyase (497 aa).

Asn175 is a binding site for Mn(2+). Prenylated FMN-binding positions include Ile178–Arg180, Arg192–Leu194, and Arg197–Gly198. Glu241 contacts Mn(2+). The Proton donor role is filled by Asp290.

Belongs to the UbiD family. In terms of assembly, homohexamer. Prenylated FMN serves as cofactor. Mn(2+) is required as a cofactor.

The protein localises to the cell membrane. The enzyme catalyses a 4-hydroxy-3-(all-trans-polyprenyl)benzoate + H(+) = a 2-(all-trans-polyprenyl)phenol + CO2. It participates in cofactor biosynthesis; ubiquinone biosynthesis. Catalyzes the decarboxylation of 3-octaprenyl-4-hydroxy benzoate to 2-octaprenylphenol, an intermediate step in ubiquinone biosynthesis. The chain is 3-octaprenyl-4-hydroxybenzoate carboxy-lyase from Shigella dysenteriae serotype 1 (strain Sd197).